A 419-amino-acid chain; its full sequence is MLYYLFDYLEKLQLPGARLFHYVSFRSAVAIILALLLATVIGNRIIERLRKAQIGETIRDLGLEGQLSKKGTPTMGGLIIIISILIPTLLLARLDNVYILLMIVTTLLLGSLGFLDDYIKVFRKKKEGLHGRYKIIGQVGLGFIIGIVLYMNPAVVIKENSEVLRDGQVERVHFNKQEVKSTKTTIPFVKNNNFDYADILPFEGKTKVLFGWILFVCVAVVVVTFISNCANLTDGLDGLATGSSAIIGVVLAIFAYVSSHIEMASYLNIMFIPGAEELTIFAFAFVGATIGFLWYNAYPAQVFMGDTGSLTLGGIIAVFALIIRKEMLLPILCFVFIIEGLSVMIQVFYFKLTKRRTGEGRRIFKMTPLHHHFQKPGNAGIDAWLQKPMQAIPESKITVRFWLVGIIMAAITIATLKMR.

Transmembrane regions (helical) follow at residues 22-42 (YVSFRSAVAIILALLLATVIG), 72-92 (TPTMGGLIIIISILIPTLLLA), 99-119 (ILLMIVTTLLLGSLGFLDDYI), 135-155 (IIGQVGLGFIIGIVLYMNPAV), 208-228 (VLFGWILFVCVAVVVVTFISN), 238-258 (GLATGSSAIIGVVLAIFAYVS), 278-298 (LTIFAFAFVGATIGFLWYNAY), 303-323 (FMGDTGSLTLGGIIAVFALII), 328-348 (LLPILCFVFIIEGLSVMIQVF), and 396-416 (KITVRFWLVGIIMAAITIATL).

The protein belongs to the glycosyltransferase 4 family. MraY subfamily. The cofactor is Mg(2+).

The protein resides in the cell inner membrane. It carries out the reaction UDP-N-acetyl-alpha-D-muramoyl-L-alanyl-gamma-D-glutamyl-meso-2,6-diaminopimeloyl-D-alanyl-D-alanine + di-trans,octa-cis-undecaprenyl phosphate = di-trans,octa-cis-undecaprenyl diphospho-N-acetyl-alpha-D-muramoyl-L-alanyl-D-glutamyl-meso-2,6-diaminopimeloyl-D-alanyl-D-alanine + UMP. It functions in the pathway cell wall biogenesis; peptidoglycan biosynthesis. Functionally, catalyzes the initial step of the lipid cycle reactions in the biosynthesis of the cell wall peptidoglycan: transfers peptidoglycan precursor phospho-MurNAc-pentapeptide from UDP-MurNAc-pentapeptide onto the lipid carrier undecaprenyl phosphate, yielding undecaprenyl-pyrophosphoryl-MurNAc-pentapeptide, known as lipid I. The polypeptide is Phospho-N-acetylmuramoyl-pentapeptide-transferase (Porphyromonas gingivalis (strain ATCC 33277 / DSM 20709 / CIP 103683 / JCM 12257 / NCTC 11834 / 2561)).